The sequence spans 503 residues: Transcriptional regulator LovE (503 aa).

Residues 1–14 (MAADQGTFTTSVTL) show a composition bias toward polar residues. The interval 1 to 21 (MAADQGTFTTSVTLSPVEGSR) is disordered. A DNA-binding region (zn(2)-C6 fungal-type) is located at residues 35 to 67 (CDRCHAQKIKCTGNKEVTARAPCQRCQQAGLRC). Disordered stretches follow at residues 89–124 (ADPD…RQFL) and 331–362 (SHMN…DTIP). Over residues 339–349 (SRSESPSRDDT) the composition is skewed to basic and acidic residues. Residues 350-359 (SSTSGHSSVD) are compositionally biased toward polar residues.

Its subcellular location is the nucleus. Its function is as follows. Transcription factor that regulates the expression of the he gene cluster that mediates the biosynthesis of lovastatin (also known as mevinolin, mevacor or monacolin K), a hypolipidemic inhibitor of (3S)-hydroxymethylglutaryl-coenzyme A (HMG-CoA) reductase (HMGR). This Aspergillus terreus (strain NIH 2624 / FGSC A1156) protein is Transcriptional regulator LovE.